We begin with the raw amino-acid sequence, 838 residues long: MGNGLWFVGVIILGAAWGQVHDWTEQTDPWFLDGLGMDRMYWRDTNTGRLWLPNTPDPQKPPRGFLAPPDELNLTTASLPLLRWYEERFCFVLVTTAEFPRDPGQLLYIPKTYLLGRPPNASLPAPTTVEPTAQPPPAVAPLKGLLHNPTASVLLRSRAWVTFSAVPDPEALTFPRGDNVATASHPSGPRDTPPPRPPVGARRHPTTELDITHLHNASTTWLATRGLLRSPGRYVYFSPSASTWPVGIWTTGELVLGCDAALVRARYGREFMGLVISMHDSPPAEVMVVPAGQTLDRVGDPADENPPGALPGPPGGPRYRVFVLGSLTRADNGSALDALRRVGGYPEEGTNYAQFLSRAYAEFFSGDAGAEQGPRPPLFWRLTGLLATSGFAFVNAAHANGAVCLSDLLGFLAHSRALAGLAARGAAGCAADSVFFNVSVLDPTARLQLEARLQHLVAEILEREQSLALHALGYQLAFVLDSPSAYDAVAPSAAHLIDALYAEFLGGRVVTTPVVHRALFYASAVLRQPFLAGVPSAVQRERARRSLLIASALCTSDVAAATNADLRTALARADHQKTLFWLPDHFSPCAASLRFDLDESVFILDALAQATRSETPVEVLAQQTHGLASTLTRWAHYNALIRAFVPEASHRCGGQSANVEPRILVPITHNASYVVTHSPLPRGIGYKLTGVDVRRPLFLTYLTATCEGSTRDIESKRLVRTQNQRDLGLVGAVFMRYTPAGEVMSVLLVDTDNTQQQIAAGPTEGAPSVFSSDVPSTALLLFPNGTVIHLLAFDTQPVAAIAPGFLAASALGVVMITAALAGILKVLRTSVPFFWRRE.

A signal peptide spans 1–18 (MGNGLWFVGVIILGAAWG). The Virion surface segment spans residues 19-803 (QVHDWTEQTD…DTQPVAAIAP (785 aa)). N-linked (GlcNAc...) asparagine; by host glycans are attached at residues Asn-73 and Asn-120. The disordered stretch occupies residues 174–204 (FPRGDNVATASHPSGPRDTPPPRPPVGARRH). An N-linked (GlcNAc...) asparagine; by host glycan is attached at Asn-216. Residues 259-323 (DAALVRARYG…PGGPRYRVFV (65 aa)) are interaction with gL. N-linked (GlcNAc...) asparagine; by host glycans are attached at residues Asn-332, Asn-437, Asn-670, and Asn-784. Residues 804 to 824 (GFLAASALGVVMITAALAGIL) form a helical membrane-spanning segment. Topologically, residues 825–838 (KVLRTSVPFFWRRE) are intravirion.

This sequence belongs to the herpesviridae glycoprotein H family. Interacts with glycoprotein L (gL); this interaction is necessary for the correct processing and cell surface expression of gH. The heterodimer gH/gL seems to interact with gB trimers during fusion. In terms of processing, N-glycosylated, O-glycosylated, and sialylated.

It is found in the virion membrane. It localises to the host cell membrane. The protein localises to the host endosome membrane. Functionally, the heterodimer glycoprotein H-glycoprotein L is required for the fusion of viral and plasma membranes leading to virus entry into the host cell. Following initial binding to host receptor, membrane fusion is mediated by the fusion machinery composed of gB and the heterodimer gH/gL. May also be involved in the fusion between the virion envelope and the outer nuclear membrane during virion morphogenesis. The polypeptide is Envelope glycoprotein H (Homo sapiens (Human)).